The primary structure comprises 1070 residues: DNA double-strand break repair Rad50 ATPase (1070 aa).

ATP contacts are provided by residues Arg-12, 32–38 (NGSGKSS), and Gln-142. Coiled coils occupy residues 227–257 (LEEL…RLQE), 369–403 (ECRT…EKAG), and 449–478 (LREL…KEIR). A Zinc-hook domain is found at 508–607 (LENLEDFNEL…KLNRLKEAKK (100 aa)). Cys-555 and Cys-558 together coordinate Zn(2+). Coiled-coil stretches lie at residues 570-614 (TAEE…QAYD) and 878-908 (LKRL…ADEL). 969-974 (LLSGGE) lines the ATP pocket.

It belongs to the SMC family. RAD50 subfamily. Homodimer. Forms a heterotetramer composed of two Mre11 subunits and two Rad50 subunits. The cofactor is Zn(2+).

Functionally, part of the Rad50/Mre11 complex, which is involved in the early steps of DNA double-strand break (DSB) repair. The complex may facilitate opening of the processed DNA ends to aid in the recruitment of HerA and NurA. Rad50 controls the balance between DNA end bridging and DNA resection via ATP-dependent structural rearrangements of the Rad50/Mre11 complex. This chain is DNA double-strand break repair Rad50 ATPase, found in Methanosarcina mazei (strain ATCC BAA-159 / DSM 3647 / Goe1 / Go1 / JCM 11833 / OCM 88) (Methanosarcina frisia).